Consider the following 621-residue polypeptide: Alpha-actinin-like protein 1 (621 aa).

Calponin-homology (CH) domains are found at residues 8-114 (SVQN…LRFT) and 123-230 (LTAK…HAFS). Positions 86–110 (LTNIGPADIVDGNLKLILGLIWTLI) are actin-binding. 3 consecutive EF-hand domains span residues 388–419 (LSTI…LGPL), 487–549 (DGIT…EIVM), and 550–618 (EELE…AEDK).

Belongs to the alpha-actinin family.

It is found in the cytoplasm. The protein localises to the cytoskeleton. In terms of biological role, binds to actin and is involved in actin-ring formation and organization. Plays a role in cytokinesis and is involved in septation. This is Alpha-actinin-like protein 1 (ain1) from Schizosaccharomyces pombe (strain 972 / ATCC 24843) (Fission yeast).